Reading from the N-terminus, the 418-residue chain is 4-hydroxy-3-methylbut-2-en-1-yl diphosphate synthase (flavodoxin) (418 aa).

4 residues coordinate [4Fe-4S] cluster: C305, C308, C351, and E358.

Belongs to the IspG family. [4Fe-4S] cluster is required as a cofactor.

The catalysed reaction is (2E)-4-hydroxy-3-methylbut-2-enyl diphosphate + oxidized [flavodoxin] + H2O + 2 H(+) = 2-C-methyl-D-erythritol 2,4-cyclic diphosphate + reduced [flavodoxin]. The protein operates within isoprenoid biosynthesis; isopentenyl diphosphate biosynthesis via DXP pathway; isopentenyl diphosphate from 1-deoxy-D-xylulose 5-phosphate: step 5/6. Converts 2C-methyl-D-erythritol 2,4-cyclodiphosphate (ME-2,4cPP) into 1-hydroxy-2-methyl-2-(E)-butenyl 4-diphosphate. The polypeptide is 4-hydroxy-3-methylbut-2-en-1-yl diphosphate synthase (flavodoxin) (Bartonella bacilliformis (strain ATCC 35685 / KC583 / Herrer 020/F12,63)).